Consider the following 358-residue polypeptide: E3 ubiquitin-protein ligase RFI2 (358 aa).

The segment at 1–34 is disordered; that stretch reads MAGAKDSGCDDDLRIAGGCDPGKRGNPEDSSSPV. Residues 38 to 83 form an RING-type; atypical zinc finger; that stretch reads CSICLESVLDDGTRSKAKLQCGHQFHLDCIGSAFNMKGAMQCPNCR. 2 disordered regions span residues 174–201 and 248–313; these read GPAA…DHFH and SNQR…DQNV. A compositionally biased stretch (basic and acidic residues) spans 187–201; the sequence is TDDHPWNSHSNDHFH. Positions 248 to 266 are enriched in polar residues; the sequence is SNQRSSPAINSYQGSSTQM. Residues 299–309 are compositionally biased toward pro residues; sequence LPPPPPPPPMP.

The protein resides in the nucleus. The catalysed reaction is S-ubiquitinyl-[E2 ubiquitin-conjugating enzyme]-L-cysteine + [acceptor protein]-L-lysine = [E2 ubiquitin-conjugating enzyme]-L-cysteine + N(6)-ubiquitinyl-[acceptor protein]-L-lysine.. It functions in the pathway protein modification; protein ubiquitination. Mediates phytochrome (phyA and phyB)-controlled seedling deetiolation responses such as hypocotyl elongation in response to red and far-red light. Required for light-induced expression of LHCB3 and CHALCONE SYNTHASE (CHS). Negatively regulates CONSTANS (CO) and FLOWERING LOCUS T (FT) expression and photoperiodic flowering. This is E3 ubiquitin-protein ligase RFI2 from Arabidopsis thaliana (Mouse-ear cress).